Here is a 167-residue protein sequence, read N- to C-terminus: Protein MIX23 (167 aa).

The interval 81 to 108 (QLDQDRNTSKSPLKSQQQLPSSSTTQVS) is disordered. The segment covering 89–106 (SKSPLKSQQQLPSSSTTQ) has biased composition (low complexity).

It belongs to the MIX23 family.

This is Protein MIX23 (cid2) from Schizosaccharomyces pombe (strain 972 / ATCC 24843) (Fission yeast).